We begin with the raw amino-acid sequence, 291 residues long: N-acetylmannosamine kinase (291 aa).

ATP-binding positions include 5 to 12 (AIDIGGTK) and 132 to 139 (GVGGGVVS). Residues His-156, Cys-166, Cys-168, and Cys-173 each contribute to the Zn(2+) site.

The protein belongs to the ROK (NagC/XylR) family. NanK subfamily. Homodimer.

The catalysed reaction is an N-acyl-D-mannosamine + ATP = an N-acyl-D-mannosamine 6-phosphate + ADP + H(+). The protein operates within amino-sugar metabolism; N-acetylneuraminate degradation; D-fructose 6-phosphate from N-acetylneuraminate: step 2/5. Catalyzes the phosphorylation of N-acetylmannosamine (ManNAc) to ManNAc-6-P. This Escherichia coli O139:H28 (strain E24377A / ETEC) protein is N-acetylmannosamine kinase.